A 347-amino-acid chain; its full sequence is GMP reductase (347 aa).

108-131 (ADFQKTKDIMALTEDLIFICIDIA) serves as a coordination point for NADP(+). Residues Gly181 and Gly183 each coordinate K(+). The Thioimidate intermediate role is filled by Cys186. 216–239 (IIGDGGCSCAGDVSKAFGGGADFV) contacts NADP(+).

The protein belongs to the IMPDH/GMPR family. GuaC type 1 subfamily. In terms of assembly, homotetramer.

It catalyses the reaction IMP + NH4(+) + NADP(+) = GMP + NADPH + 2 H(+). Its function is as follows. Catalyzes the irreversible NADPH-dependent deamination of GMP to IMP. It functions in the conversion of nucleobase, nucleoside and nucleotide derivatives of G to A nucleotides, and in maintaining the intracellular balance of A and G nucleotides. The polypeptide is GMP reductase (Photobacterium profundum (strain SS9)).